The primary structure comprises 81 residues: Small ribosomal subunit protein uS17 (81 aa).

Belongs to the universal ribosomal protein uS17 family. In terms of assembly, part of the 30S ribosomal subunit.

Functionally, one of the primary rRNA binding proteins, it binds specifically to the 5'-end of 16S ribosomal RNA. This chain is Small ribosomal subunit protein uS17, found in Methylocella silvestris (strain DSM 15510 / CIP 108128 / LMG 27833 / NCIMB 13906 / BL2).